We begin with the raw amino-acid sequence, 414 residues long: Serine/threonine-protein kinase 32B (414 aa).

Residues 23–283 (FQILRAIGKG…LHDIQSVPYL (261 aa)) enclose the Protein kinase domain. Residues 29-37 (IGKGSFGKV) and K52 contribute to the ATP site. D146 (proton acceptor) is an active-site residue. The disordered stretch occupies residues 374–396 (QGQGSQLLDTDSRGGGQAQSKLQ).

It belongs to the protein kinase superfamily. Ser/Thr protein kinase family. The cofactor is Mg(2+).

The catalysed reaction is L-seryl-[protein] + ATP = O-phospho-L-seryl-[protein] + ADP + H(+). It catalyses the reaction L-threonyl-[protein] + ATP = O-phospho-L-threonyl-[protein] + ADP + H(+). The polypeptide is Serine/threonine-protein kinase 32B (Homo sapiens (Human)).